Reading from the N-terminus, the 217-residue chain is N-(5'-phosphoribosyl)anthranilate isomerase (217 aa).

This sequence belongs to the TrpF family.

It catalyses the reaction N-(5-phospho-beta-D-ribosyl)anthranilate = 1-(2-carboxyphenylamino)-1-deoxy-D-ribulose 5-phosphate. It functions in the pathway amino-acid biosynthesis; L-tryptophan biosynthesis; L-tryptophan from chorismate: step 3/5. The sequence is that of N-(5'-phosphoribosyl)anthranilate isomerase from Bacillus velezensis (strain DSM 23117 / BGSC 10A6 / LMG 26770 / FZB42) (Bacillus amyloliquefaciens subsp. plantarum).